Consider the following 269-residue polypeptide: Flagellar brake protein YcgR (269 aa).

The region spanning 134 to 254 (QRRNFYRVTT…SRLLIQRYIT (121 aa)) is the PilZ domain.

It belongs to the YcgR family. Monomer. Interacts with the flagellar basal bodies.

The protein resides in the bacterial flagellum basal body. Its function is as follows. Acts as a flagellar brake, regulating swimming and swarming in a bis-(3'-5') cyclic diguanylic acid (c-di-GMP)-dependent manner. Binds 1 c-di-GMP dimer per subunit. Increasing levels of c-di-GMP lead to decreased motility. The sequence is that of Flagellar brake protein YcgR from Nitrosomonas eutropha (strain DSM 101675 / C91 / Nm57).